Reading from the N-terminus, the 278-residue chain is Transmembrane protein 41B (278 aa).

The segment at 1–31 (MQVHERSHTGGHTCQCNHGSEKKAPATGKVH) is disordered. 6 helical membrane passes run 39-59 (MSLLILVSIFLCAASIMFLVY), 96-116 (FYVEVLVAYFTTYIFLQTFAI), 132-154 (FPLALFLVCLCSGLGASFSYLLS), 184-204 (LINYIIFLRITPFLPNWFINI), 212-232 (PLKVFFLGTFIGVAPPSFVAI), and 249-269 (SWNSVIILMVLAVLSILPAIF). Residues 127–238 (GFLYPFPLAL…FVAIKAGTTL (112 aa)) are VTT domain; required for its function in autophagy.

This sequence belongs to the TMEM41 family.

The protein resides in the endoplasmic reticulum membrane. Its subcellular location is the endomembrane system. The catalysed reaction is a 1,2-diacyl-sn-glycero-3-phospho-L-serine(in) = a 1,2-diacyl-sn-glycero-3-phospho-L-serine(out). The enzyme catalyses cholesterol(in) = cholesterol(out). It carries out the reaction a 1,2-diacyl-sn-glycero-3-phosphocholine(in) = a 1,2-diacyl-sn-glycero-3-phosphocholine(out). It catalyses the reaction a 1,2-diacyl-sn-glycero-3-phosphoethanolamine(in) = a 1,2-diacyl-sn-glycero-3-phosphoethanolamine(out). Its function is as follows. Phospholipid scramblase involved in lipid homeostasis and membrane dynamics processes. Has phospholipid scramblase activity toward cholesterol and phosphatidylserine, as well as phosphatidylethanolamine and phosphatidylcholine. Required for autophagosome formation: participates in early stages of autophagosome biogenesis at the endoplasmic reticulum (ER) membrane by reequilibrating the leaflets of the ER as lipids are extracted by atg2 (atg2a or atg2b) to mediate autophagosome assembly. In addition to autophagy, involved in other processes in which phospholipid scramblase activity is required. Required for normal motor neuron development. The protein is Transmembrane protein 41B of Xenopus tropicalis (Western clawed frog).